The primary structure comprises 484 residues: tRNA sulfurtransferase (484 aa).

In terms of domain architecture, THUMP spans 63–167 (QGIRERLSCM…DQRLFVVHDQ (105 aa)). Residues 185–186 (LM), K267, G289, and Q298 contribute to the ATP site. Residues C346 and C457 are joined by a disulfide bond. Residues 405–483 (ALAGQVILDI…GHANVRVYRP (79 aa)) enclose the Rhodanese domain. C457 (cysteine persulfide intermediate) is an active-site residue.

The protein belongs to the ThiI family.

Its subcellular location is the cytoplasm. It carries out the reaction [ThiI sulfur-carrier protein]-S-sulfanyl-L-cysteine + a uridine in tRNA + 2 reduced [2Fe-2S]-[ferredoxin] + ATP + H(+) = [ThiI sulfur-carrier protein]-L-cysteine + a 4-thiouridine in tRNA + 2 oxidized [2Fe-2S]-[ferredoxin] + AMP + diphosphate. The catalysed reaction is [ThiS sulfur-carrier protein]-C-terminal Gly-Gly-AMP + S-sulfanyl-L-cysteinyl-[cysteine desulfurase] + AH2 = [ThiS sulfur-carrier protein]-C-terminal-Gly-aminoethanethioate + L-cysteinyl-[cysteine desulfurase] + A + AMP + 2 H(+). The protein operates within cofactor biosynthesis; thiamine diphosphate biosynthesis. Functionally, catalyzes the ATP-dependent transfer of a sulfur to tRNA to produce 4-thiouridine in position 8 of tRNAs, which functions as a near-UV photosensor. Also catalyzes the transfer of sulfur to the sulfur carrier protein ThiS, forming ThiS-thiocarboxylate. This is a step in the synthesis of thiazole, in the thiamine biosynthesis pathway. The sulfur is donated as persulfide by IscS. This is tRNA sulfurtransferase from Pseudomonas syringae pv. syringae (strain B728a).